The chain runs to 230 residues: 2,3-bisphosphoglycerate-dependent phosphoglycerate mutase (230 aa).

Residues 8 to 15 (RHGESEWN), 21 to 22 (TG), arginine 60, 87 to 90 (ERHY), lysine 98, 114 to 115 (RR), and 183 to 184 (GN) each bind substrate. Residue histidine 9 is the Tele-phosphohistidine intermediate of the active site. Catalysis depends on glutamate 87, which acts as the Proton donor/acceptor.

The protein belongs to the phosphoglycerate mutase family. BPG-dependent PGAM subfamily.

The catalysed reaction is (2R)-2-phosphoglycerate = (2R)-3-phosphoglycerate. The protein operates within carbohydrate degradation; glycolysis; pyruvate from D-glyceraldehyde 3-phosphate: step 3/5. Its function is as follows. Catalyzes the interconversion of 2-phosphoglycerate and 3-phosphoglycerate. The chain is 2,3-bisphosphoglycerate-dependent phosphoglycerate mutase from Streptococcus mutans serotype c (strain ATCC 700610 / UA159).